A 342-amino-acid chain; its full sequence is Nucleoid-associated protein Sputcn32_2288 (342 aa).

The protein belongs to the YejK family.

The protein localises to the cytoplasm. It localises to the nucleoid. This Shewanella putrefaciens (strain CN-32 / ATCC BAA-453) protein is Nucleoid-associated protein Sputcn32_2288.